We begin with the raw amino-acid sequence, 789 residues long: UPF0313 protein VC_1711 (789 aa).

The 280-residue stretch at 363–642 (AYDMIKTSVN…KALLRYHDPA (280 aa)) folds into the Radical SAM core domain. Cys-377, Cys-381, and Cys-384 together coordinate [4Fe-4S] cluster. The tract at residues 669-789 (PEKDSDLVTP…NTQRQPQRAR (121 aa)) is disordered. Residues 683–698 (KSGRHGANRFATKHTH) are compositionally biased toward basic residues. 3 stretches are compositionally biased toward polar residues: residues 716–726 (RPNSGNKSNQG), 733–763 (PTGSKPTANKPAGNQSARSEQNRGQQGQRGS), and 778–789 (RGNTQRQPQRAR).

Belongs to the UPF0313 family. Requires [4Fe-4S] cluster as cofactor.

This Vibrio cholerae serotype O1 (strain ATCC 39315 / El Tor Inaba N16961) protein is UPF0313 protein VC_1711.